Here is a 161-residue protein sequence, read N- to C-terminus: Globin CTT-VIIB-8 (161 aa).

The first 16 residues, 1–16, serve as a signal peptide directing secretion; that stretch reads MKFFAVLALCIVGAIA. The region spanning 18 to 161 is the Globin domain; that stretch reads PLTADEASLV…NTYAIVVPRL (144 aa). Residues His-76 and His-111 each contribute to the heme b site.

This sequence belongs to the globin family. As to quaternary structure, homodimer.

This Chironomus thummi thummi (Midge) protein is Globin CTT-VIIB-8 (CTT-7B8).